The sequence spans 403 residues: Putative glutamate--cysteine ligase 2 (403 aa).

A disordered region spans residues glutamate 370–histidine 403.

This sequence belongs to the glutamate--cysteine ligase type 2 family. YbdK subfamily.

The enzyme catalyses L-cysteine + L-glutamate + ATP = gamma-L-glutamyl-L-cysteine + ADP + phosphate + H(+). ATP-dependent carboxylate-amine ligase which exhibits weak glutamate--cysteine ligase activity. The polypeptide is Putative glutamate--cysteine ligase 2 (Bordetella avium (strain 197N)).